The primary structure comprises 354 residues: S-adenosylmethionine:tRNA ribosyltransferase-isomerase (354 aa).

Belongs to the QueA family. In terms of assembly, monomer.

It is found in the cytoplasm. The enzyme catalyses 7-aminomethyl-7-carbaguanosine(34) in tRNA + S-adenosyl-L-methionine = epoxyqueuosine(34) in tRNA + adenine + L-methionine + 2 H(+). It participates in tRNA modification; tRNA-queuosine biosynthesis. In terms of biological role, transfers and isomerizes the ribose moiety from AdoMet to the 7-aminomethyl group of 7-deazaguanine (preQ1-tRNA) to give epoxyqueuosine (oQ-tRNA). The sequence is that of S-adenosylmethionine:tRNA ribosyltransferase-isomerase from Pseudomonas savastanoi pv. phaseolicola (strain 1448A / Race 6) (Pseudomonas syringae pv. phaseolicola (strain 1448A / Race 6)).